The sequence spans 331 residues: Lipoyl synthase (331 aa).

Positions 74, 79, 85, 100, 104, 107, and 314 each coordinate [4Fe-4S] cluster. Residues 85–303 (CFGKGTATFM…ETEAYKMGFT (219 aa)) enclose the Radical SAM core domain.

The protein belongs to the radical SAM superfamily. Lipoyl synthase family. [4Fe-4S] cluster serves as cofactor.

The protein localises to the cytoplasm. It carries out the reaction [[Fe-S] cluster scaffold protein carrying a second [4Fe-4S](2+) cluster] + N(6)-octanoyl-L-lysyl-[protein] + 2 oxidized [2Fe-2S]-[ferredoxin] + 2 S-adenosyl-L-methionine + 4 H(+) = [[Fe-S] cluster scaffold protein] + N(6)-[(R)-dihydrolipoyl]-L-lysyl-[protein] + 4 Fe(3+) + 2 hydrogen sulfide + 2 5'-deoxyadenosine + 2 L-methionine + 2 reduced [2Fe-2S]-[ferredoxin]. It functions in the pathway protein modification; protein lipoylation via endogenous pathway; protein N(6)-(lipoyl)lysine from octanoyl-[acyl-carrier-protein]: step 2/2. Its function is as follows. Catalyzes the radical-mediated insertion of two sulfur atoms into the C-6 and C-8 positions of the octanoyl moiety bound to the lipoyl domains of lipoate-dependent enzymes, thereby converting the octanoylated domains into lipoylated derivatives. This chain is Lipoyl synthase, found in Leptothrix cholodnii (strain ATCC 51168 / LMG 8142 / SP-6) (Leptothrix discophora (strain SP-6)).